The following is a 96-amino-acid chain: Co-chaperonin GroES 2 (96 aa).

Belongs to the GroES chaperonin family. Heptamer of 7 subunits arranged in a ring. Interacts with the chaperonin GroEL.

The protein resides in the cytoplasm. Functionally, together with the chaperonin GroEL, plays an essential role in assisting protein folding. The GroEL-GroES system forms a nano-cage that allows encapsulation of the non-native substrate proteins and provides a physical environment optimized to promote and accelerate protein folding. GroES binds to the apical surface of the GroEL ring, thereby capping the opening of the GroEL channel. The protein is Co-chaperonin GroES 2 of Vibrio vulnificus (strain CMCP6).